The chain runs to 95 residues: Small ribosomal subunit protein uS19 (95 aa).

The disordered stretch occupies residues 75–95; it reads APTRSFRGHGGKKADKRGKMK. Over residues 80–95 the composition is skewed to basic residues; that stretch reads FRGHGGKKADKRGKMK.

This sequence belongs to the universal ribosomal protein uS19 family.

Its function is as follows. Protein S19 forms a complex with S13 that binds strongly to the 16S ribosomal RNA. The chain is Small ribosomal subunit protein uS19 from Roseiflexus sp. (strain RS-1).